A 292-amino-acid chain; its full sequence is Probable deoxyhypusine synthase (292 aa).

The Nucleophile role is filled by lysine 267.

It belongs to the deoxyhypusine synthase family. It depends on NAD(+) as a cofactor.

The enzyme catalyses [eIF5A protein]-L-lysine + spermidine = [eIF5A protein]-deoxyhypusine + propane-1,3-diamine. Its pathway is protein modification; eIF5A hypusination. In terms of biological role, catalyzes the NAD-dependent oxidative cleavage of spermidine and the subsequent transfer of the butylamine moiety of spermidine to the epsilon-amino group of a specific lysine residue of the eIF-5A precursor protein to form the intermediate deoxyhypusine residue. This Pyrobaculum aerophilum (strain ATCC 51768 / DSM 7523 / JCM 9630 / CIP 104966 / NBRC 100827 / IM2) protein is Probable deoxyhypusine synthase (dys).